Reading from the N-terminus, the 366-residue chain is Tripartite motif-containing protein 54 (366 aa).

The segment at 26–82 (CPICLEMFSKPVVILPCQHNLCRKCANDVFQASNPLWQSRSSTTVSSGGRFRCPSCR) adopts an RING-type zinc-finger fold. The segment at 121–163 (EQHLMCEEHEDEKINIYCLSCEVPTCSLCKVFGAHKDCEVAPL) adopts a B box-type zinc-finger fold. Positions 126, 129, 149, and 155 each coordinate Zn(2+). The mediates microtubule-binding and homooligomerization stretch occupies residues 168-211 (KRQKSELSDGIAMLVAGNDRVQAVITQMEEVCQTIEENSRRQKQ). A coiled-coil region spans residues 185–258 (NDRVQAVITQ…LIRQYGDHLE (74 aa)). The COS domain occupies 271–329 (MEEPQMALYLQQAKELINKVGTMSKVELAGRPEPGYERMDQFTVSVEHVAEMLRTIDFQ). Residues 326-366 (IDFQPGTSGEEEDEEVAVEGEEGNAGPEEERTDGRESTGQH) form a disordered region. Over residues 334-347 (GEEEDEEVAVEGEE) the composition is skewed to acidic residues. A compositionally biased stretch (basic and acidic residues) spans 353–366 (EEERTDGRESTGQH).

Homooligomer and heterooligomer. Interacts with TRIM63 and probably with TRIM55. Interacts with tubulin.

The protein localises to the cytoplasm. It is found in the cytoskeleton. Its subcellular location is the myofibril. It localises to the sarcomere. The protein resides in the z line. May bind and stabilize microtubules during myotubes formation. This Bos taurus (Bovine) protein is Tripartite motif-containing protein 54 (TRIM54).